The sequence spans 530 residues: Formate--tetrahydrofolate ligase (530 aa).

46-53 provides a ligand contact to ATP; the sequence is TPEGEGKT.

Belongs to the formate--tetrahydrofolate ligase family.

The enzyme catalyses (6S)-5,6,7,8-tetrahydrofolate + formate + ATP = (6R)-10-formyltetrahydrofolate + ADP + phosphate. It functions in the pathway one-carbon metabolism; tetrahydrofolate interconversion. The polypeptide is Formate--tetrahydrofolate ligase (Malacoplasma penetrans (strain HF-2) (Mycoplasma penetrans)).